A 211-amino-acid polypeptide reads, in one-letter code: 3,4-dihydroxy-2-butanone 4-phosphate synthase (211 aa).

Residues R37–E38, D42, R150–T154, and E174 each bind D-ribulose 5-phosphate. Residue E38 participates in Mg(2+) binding. H153 contacts Mg(2+).

This sequence belongs to the DHBP synthase family. As to quaternary structure, homodimer. It depends on Mg(2+) as a cofactor. Mn(2+) serves as cofactor.

It catalyses the reaction D-ribulose 5-phosphate = (2S)-2-hydroxy-3-oxobutyl phosphate + formate + H(+). Its pathway is cofactor biosynthesis; riboflavin biosynthesis; 2-hydroxy-3-oxobutyl phosphate from D-ribulose 5-phosphate: step 1/1. Its function is as follows. Catalyzes the conversion of D-ribulose 5-phosphate to formate and 3,4-dihydroxy-2-butanone 4-phosphate. The polypeptide is 3,4-dihydroxy-2-butanone 4-phosphate synthase (Buchnera aphidicola subsp. Baizongia pistaciae (strain Bp)).